The chain runs to 249 residues: NH(3)-dependent NAD(+) synthetase (249 aa).

29-36 (GVSGGVDS) serves as a coordination point for ATP. Asp-35 is a Mg(2+) binding site. Position 116 (Arg-116) interacts with deamido-NAD(+). ATP is bound at residue Thr-136. Residue Glu-141 participates in Mg(2+) binding. Deamido-NAD(+)-binding residues include Lys-149 and Asp-156. The ATP site is built by Lys-165 and Ser-187. 233-234 (HK) is a deamido-NAD(+) binding site.

Belongs to the NAD synthetase family. In terms of assembly, homodimer.

The catalysed reaction is deamido-NAD(+) + NH4(+) + ATP = AMP + diphosphate + NAD(+) + H(+). It functions in the pathway cofactor biosynthesis; NAD(+) biosynthesis; NAD(+) from deamido-NAD(+) (ammonia route): step 1/1. In terms of biological role, catalyzes the ATP-dependent amidation of deamido-NAD to form NAD. Uses ammonia as a nitrogen source. This Syntrophomonas wolfei subsp. wolfei (strain DSM 2245B / Goettingen) protein is NH(3)-dependent NAD(+) synthetase.